The sequence spans 307 residues: Pseudouridine-5'-phosphate glycosidase (307 aa).

The active-site Proton donor is the Glu25. Residues Lys86 and Val106 each coordinate substrate. Position 138 (Asp138) interacts with Mn(2+). Residue 140–142 (SAD) participates in substrate binding. The active-site Nucleophile is Lys159.

The protein belongs to the pseudouridine-5'-phosphate glycosidase family. Homotrimer. Requires Mn(2+) as cofactor.

It catalyses the reaction D-ribose 5-phosphate + uracil = psi-UMP + H2O. Functionally, catalyzes the reversible cleavage of pseudouridine 5'-phosphate (PsiMP) to ribose 5-phosphate and uracil. Functions biologically in the cleavage direction, as part of a pseudouridine degradation pathway. The polypeptide is Pseudouridine-5'-phosphate glycosidase (Caldanaerobacter subterraneus subsp. tengcongensis (strain DSM 15242 / JCM 11007 / NBRC 100824 / MB4) (Thermoanaerobacter tengcongensis)).